The chain runs to 181 residues: Large ribosomal subunit protein uL5 (181 aa).

This sequence belongs to the universal ribosomal protein uL5 family. Part of the 50S ribosomal subunit; part of the 5S rRNA/L5/L18/L25 subcomplex. Contacts the 5S rRNA and the P site tRNA. Forms a bridge to the 30S subunit in the 70S ribosome.

Its function is as follows. This is one of the proteins that bind and probably mediate the attachment of the 5S RNA into the large ribosomal subunit, where it forms part of the central protuberance. In the 70S ribosome it contacts protein S13 of the 30S subunit (bridge B1b), connecting the 2 subunits; this bridge is implicated in subunit movement. Contacts the P site tRNA; the 5S rRNA and some of its associated proteins might help stabilize positioning of ribosome-bound tRNAs. This is Large ribosomal subunit protein uL5 from Campylobacter hominis (strain ATCC BAA-381 / DSM 21671 / CCUG 45161 / LMG 19568 / NCTC 13146 / CH001A).